Here is a 258-residue protein sequence, read N- to C-terminus: Regulatory protein RecX (258 aa).

It belongs to the RecX family.

It localises to the cytoplasm. Modulates RecA activity. The polypeptide is Regulatory protein RecX (Streptococcus thermophilus (strain ATCC BAA-491 / LMD-9)).